Consider the following 669-residue polypeptide: MRMSATVGIGRIPVRDVQPVVEYGRRPAKAVTGETFEVTATVFREGHDAVAANVVLKDPEGRPGPWTPMRELAPGSDRWGATVTPGAPGNWTYRVEAWSDPVATWRHAARIKVPAGIDAGLVLEEGSELYRRAAAGVPKDSGRDVLLAAATALLDDTLPVATRLAAALTPQVDAVLARHPLRDLVTSSDPLPLLVERERALYGAWYEFFPRSEGTPHTPHGTFRTAARRLPAIAAMGFDVVYLPPIHPIGTTHRKGRNNTLSATGDDVGVPWAIGSPEGGHDSIHPALGTLDDFDHFVTEAARHGLEIALDFALQCSPDHPWVHKHPEWFHHRPDGTIAHAENPPKKYQDIYPIAFDADPDGLATETVRILRHWMDHGVRIFRVDNPHTKPVAFWERVIADINGTDPDVIFLAEAFTRPAMMATLAQIGFQQSYTYFTWRNTKQELTEYLEELSGEAAAYMRPNFFANTPDILHAYLQHGGRPAFEVRAVLAATLSPTWGIYSGYELCENTPLREGSEEYLDSEKYQLKPRDWTRAAREGTTIAPLVTRLNTIRREHPALHRLRNLRFHHTDNDALIAYSKRVGSDVVLVVANLDPHRTQEATISLDMPQLGLDWHDSVPVHDELTGRTYHWGRANYVRLEPGRAPAHVFHVRRPSAAAAPQNGGSGAS.

Positions 255, 315, and 350 each coordinate alpha-maltose 1-phosphate. Asp-385 (nucleophile) is an active-site residue. Asn-386 lines the alpha-maltose 1-phosphate pocket. Residue Glu-414 is the Proton donor of the active site. 525–526 (KY) is an alpha-maltose 1-phosphate binding site.

The protein belongs to the glycosyl hydrolase 13 family. GlgE subfamily. Homodimer.

The enzyme catalyses alpha-maltose 1-phosphate + [(1-&gt;4)-alpha-D-glucosyl](n) = [(1-&gt;4)-alpha-D-glucosyl](n+2) + phosphate. In terms of biological role, maltosyltransferase that uses maltose 1-phosphate (M1P) as the sugar donor to elongate linear or branched alpha-(1-&gt;4)-glucans. Maltooligosaccharides with a degree of polymerization (DP) superior or equal to 4 are efficient acceptors, with DP6 being optimal in the GlgE-catalyzed polymerization with M1P. Is probably involved in a branched alpha-glucan biosynthetic pathway from trehalose, together with TreS, Mak and GlgB. The sequence is that of Alpha-1,4-glucan:maltose-1-phosphate maltosyltransferase 2 (glgE2) from Streptomyces coelicolor (strain ATCC BAA-471 / A3(2) / M145).